Consider the following 496-residue polypeptide: Chromosomal replication initiator protein DnaA (496 aa).

The tract at residues 1–76 (MKMDSAVSEE…TELWQEENPQ (76 aa)) is domain I, interacts with DnaA modulators. Positions 76–150 (QILKVEVVVR…AAATGAVLGS (75 aa)) are domain II. The segment at 151–373 (PLDPRYTFDT…GAFNQLLFRQ (223 aa)) is domain III, AAA+ region. The ATP site is built by G197, G199, K200, and T201. The tract at residues 374–496 (SFEPNISIDR…LKRLINDQAA (123 aa)) is domain IV, binds dsDNA.

The protein belongs to the DnaA family. In terms of assembly, oligomerizes as a right-handed, spiral filament on DNA at oriC.

It is found in the cytoplasm. Functionally, plays an essential role in the initiation and regulation of chromosomal replication. ATP-DnaA binds to the origin of replication (oriC) to initiate formation of the DNA replication initiation complex once per cell cycle. Binds the DnaA box (a 9 base pair repeat at the origin) and separates the double-stranded (ds)DNA. Forms a right-handed helical filament on oriC DNA; dsDNA binds to the exterior of the filament while single-stranded (ss)DNA is stabiized in the filament's interior. The ATP-DnaA-oriC complex binds and stabilizes one strand of the AT-rich DNA unwinding element (DUE), permitting loading of DNA polymerase. After initiation quickly degrades to an ADP-DnaA complex that is not apt for DNA replication. Binds acidic phospholipids. This Brucella abortus biovar 1 (strain 9-941) protein is Chromosomal replication initiator protein DnaA.